Reading from the N-terminus, the 483-residue chain is MFS-type transporter ppzB (483 aa).

5 helical membrane passes run 18–38 (FILT…GILL), 62–82 (AFLA…GWAA), 96–116 (MFLV…LLVV), 149–169 (IGTI…LGGV), and 178–198 (AVFA…ALVI). Residue asparagine 219 is glycosylated (N-linked (GlcNAc...) asparagine). 6 helical membrane-spanning segments follow: residues 281–301 (LAML…ATVP), 310–330 (FSSL…FALG), 344–364 (AAAT…GLPE), 374–394 (VALF…VTSP), 424–444 (FGFS…LGGF), and 453–473 (VMGA…FLFV).

It belongs to the major facilitator superfamily. TCR/Tet family.

It is found in the membrane. In terms of biological role, MFS-type transporter; part of the gene cluster that mediates the biosynthesis of pyrrolopyrazines, secondary metabolites showing insecticidal activity. Probably involved in the secretion of peramine and other pyrrolopyrazines. In Metarhizium rileyi (strain RCEF 4871) (Nomuraea rileyi), this protein is MFS-type transporter ppzB.